A 128-amino-acid chain; its full sequence is Fluoride-specific ion channel FluC 2 (128 aa).

A run of 4 helical transmembrane segments spans residues 13–35 (ALVA…AIAG), 40–59 (LAAN…EAAA), 71–93 (LLGT…TAGL), and 97–119 (WMAA…GRAI).

Belongs to the fluoride channel Fluc/FEX (TC 1.A.43) family.

The protein localises to the cell membrane. It carries out the reaction fluoride(in) = fluoride(out). Functionally, fluoride-specific ion channel. Important for reducing fluoride concentration in the cell, thus reducing its toxicity. The polypeptide is Fluoride-specific ion channel FluC 2 (Halobacterium salinarum (strain ATCC 700922 / JCM 11081 / NRC-1) (Halobacterium halobium)).